A 182-amino-acid chain; its full sequence is Transcription termination/antitermination protein NusG (182 aa).

A KOW domain is found at 130 to 161 (VGEVVRVNEGPFADFNGTVEEVDYEKSRLKVS).

Belongs to the NusG family.

Functionally, participates in transcription elongation, termination and antitermination. This Vibrio vulnificus (strain CMCP6) protein is Transcription termination/antitermination protein NusG.